The chain runs to 408 residues: Serine/threonine transporter SstT (408 aa).

Transmembrane regions (helical) follow at residues 14–34 (GNLI…GIFS), 43–63 (IFGA…VFIL), 83–103 (IIFL…SISF), 143–163 (ALSS…GFAL), 181–201 (VLKI…GLVA), 219–239 (LIIL…LIVF), 247–269 (YPLI…SSAA), 290–310 (ISIP…IAIL), and 332–352 (VLAA…LLLI).

This sequence belongs to the dicarboxylate/amino acid:cation symporter (DAACS) (TC 2.A.23) family.

Its subcellular location is the cell inner membrane. It catalyses the reaction L-serine(in) + Na(+)(in) = L-serine(out) + Na(+)(out). The catalysed reaction is L-threonine(in) + Na(+)(in) = L-threonine(out) + Na(+)(out). Functionally, involved in the import of serine and threonine into the cell, with the concomitant import of sodium (symport system). The chain is Serine/threonine transporter SstT from Campylobacter lari (strain RM2100 / D67 / ATCC BAA-1060).